Consider the following 1463-residue polypeptide: Alpha-agarase (1463 aa).

The N-terminal stretch at 1 to 27 is a signal peptide; it reads MITSSKKIVSAMLSTSLWIGVASAAYA. Residues 28-684 constitute a propeptide that is removed on maturation; the sequence is ETTNVEAEGY…PSTLSESIFT (657 aa). Disordered stretches follow at residues 166-191 and 512-549; these read VTPENPDNPDNPDNPDDGNTGQPGTP and TDDIDQCANTPSGETANATGCSSSQEGGGTDPDTPQPG. Positions 518–536 are enriched in polar residues; it reads CANTPSGETANATGCSSSQ. Residues 534-677 enclose the PA14 domain; it reads SSQEGGGTDP…GGTNFVHPST (144 aa). The region spanning 701–832 is the CBM6 domain; it reads IIVELESFVF…QWSGDRVRFT (132 aa).

It belongs to the glycosyl hydrolase 96 family. In terms of assembly, monomer. Ca(2+) is required as a cofactor.

It carries out the reaction Endohydrolysis of 1,3-alpha-L-galactosidic linkages in agarose, yielding agarotetraose as the major product.. Functionally, alpha-agarase. Hydrolyzes agarose, agarohexaose, neoagarohexaose and porphyran. Hydrolysis of porphyran by this enzyme improves its antioxidant activity. Does not hydrolyze kappa-carrageenan, iota-carrageenen or lambda-carrageenan. The sequence is that of Alpha-agarase from Thalassotalea agarivorans (Thalassomonas agarivorans).